The primary structure comprises 466 residues: Uronate isomerase (466 aa).

It belongs to the metallo-dependent hydrolases superfamily. Uronate isomerase family.

It carries out the reaction D-glucuronate = D-fructuronate. The catalysed reaction is aldehydo-D-galacturonate = keto-D-tagaturonate. The protein operates within carbohydrate metabolism; pentose and glucuronate interconversion. In Rhizorhabdus wittichii (strain DSM 6014 / CCUG 31198 / JCM 15750 / NBRC 105917 / EY 4224 / RW1) (Sphingomonas wittichii), this protein is Uronate isomerase.